The chain runs to 790 residues: Nuclear cap-binding protein subunit 1 (790 aa).

Residues 1-26 (MSRRRHSYENDGGQPHKRRKTSDANE) are disordered. The Nuclear localization signal motif lies at 3–20 (RRRHSYENDGGQPHKRRK). Ser-7 is modified (phosphoserine). At Thr-21 the chain carries Phosphothreonine. Residues Ser-22 and Ser-201 each carry the phosphoserine modification. The 213-residue stretch at 28–240 (EDHLESLICK…CLWAQIQKLK (213 aa)) folds into the MIF4G domain. Lys-204 carries the post-translational modification N6-acetyllysine. A coiled-coil region spans residues 643–713 (STIRKMNKHV…SEQKNLFLVI (71 aa)). The disordered stretch occupies residues 666 to 685 (LARQHKRRSDDDDRSSDRKD). A Glycyl lysine isopeptide (Lys-Gly) (interchain with G-Cter in SUMO2) cross-link involves residue Lys-684. The residue at position 698 (Lys-698) is an N6-acetyllysine.

This sequence belongs to the NCBP1 family. In terms of assembly, component of the nuclear cap-binding complex (CBC), a heterodimer composed of NCBP1/CBP80 and NCBP2/CBP20 that interacts with m7GpppG-capped RNA. Found in a U snRNA export complex containing PHAX/RNUXA, NCBP1/CBP80, NCBP2/CBP20, RAN, XPO1 and m7G-capped RNA. Identified in a IGF2BP1-dependent mRNP granule complex containing untranslated mRNAs. Interacts with PHAX/RNUXA, SRRT/ARS2, EIF4G2, IGF2BP1, HNRNPF, HNRNPH1, KIAA0427/CTIF, PARN, DROSHA, UPF1 and ALYREF/THOC4. May interact with EIF4G1; the interaction is however controversial. The large PER complex involved in the repression of transcriptional termination is composed of at least PER2, CDK9, DDX5, DHX9, NCBP1/CBP80 and POLR2A (active). Component of an alternative nuclear cap-binding complex (CBC) composed of NCBP1/CBP80 and NCBP3. Interacts with METTL3. Interacts with ZFC3H1 in a RNase-insensitive manner. Interacts with MTREX. Interacts with TASOR. Interacts with DHX34; the interaction is RNA-dependent. Interacts with KPNA3. In terms of processing, dephosphorylated at Thr-21 by the PNUTS-PP1 complex during RNA polymerase II transcription pause-release. In terms of tissue distribution, expressed in the spermatogonia, spermatocytes and granular cells within the cerebellum.

The protein resides in the nucleus. It is found in the cytoplasm. In terms of biological role, component of the cap-binding complex (CBC), which binds cotranscriptionally to the 5'-cap of pre-mRNAs and is involved in various processes such as pre-mRNA splicing, translation regulation, nonsense-mediated mRNA decay, RNA-mediated gene silencing (RNAi) by microRNAs (miRNAs) and mRNA export. The CBC complex is involved in mRNA export from the nucleus via its interaction with ALYREF/THOC4/ALY, leading to the recruitment of the mRNA export machinery to the 5'-end of mRNA and to mRNA export in a 5' to 3' direction through the nuclear pore. The CBC complex is also involved in mediating U snRNA and intronless mRNAs export from the nucleus. The CBC complex is essential for a pioneer round of mRNA translation, before steady state translation when the CBC complex is replaced by cytoplasmic cap-binding protein eIF4E. The pioneer round of mRNA translation mediated by the CBC complex plays a central role in nonsense-mediated mRNA decay (NMD), NMD only taking place in mRNAs bound to the CBC complex, but not on eIF4E-bound mRNAs. The CBC complex enhances NMD in mRNAs containing at least one exon-junction complex (EJC) via its interaction with UPF1, promoting the interaction between UPF1 and UPF2. The CBC complex is also involved in 'failsafe' NMD, which is independent of the EJC complex, while it does not participate in Staufen-mediated mRNA decay (SMD). During cell proliferation, the CBC complex is also involved in microRNAs (miRNAs) biogenesis via its interaction with SRRT/ARS2 and is required for miRNA-mediated RNA interference. The CBC complex also acts as a negative regulator of PARN, thereby acting as an inhibitor of mRNA deadenylation. In the CBC complex, NCBP1/CBP80 does not bind directly capped RNAs (m7GpppG-capped RNA) but is required to stabilize the movement of the N-terminal loop of NCBP2/CBP20 and lock the CBC into a high affinity cap-binding state with the cap structure. Associates with NCBP3 to form an alternative cap-binding complex (CBC) which plays a key role in mRNA export and is particularly important in cellular stress situations such as virus infections. The conventional CBC with NCBP2 binds both small nuclear RNA (snRNA) and messenger (mRNA) and is involved in their export from the nucleus whereas the alternative CBC with NCBP3 does not bind snRNA and associates only with mRNA thereby playing a role only in mRNA export. NCBP1/CBP80 is required for cell growth and viability. The chain is Nuclear cap-binding protein subunit 1 (Ncbp1) from Mus musculus (Mouse).